A 198-amino-acid polypeptide reads, in one-letter code: Chitin synthase 2 (198 aa).

Belongs to the chitin synthase family. Class III subfamily.

The protein localises to the cell membrane. The enzyme catalyses [(1-&gt;4)-N-acetyl-beta-D-glucosaminyl](n) + UDP-N-acetyl-alpha-D-glucosamine = [(1-&gt;4)-N-acetyl-beta-D-glucosaminyl](n+1) + UDP + H(+). Polymerizes chitin, a structural polymer of the cell wall and septum, by transferring the sugar moiety of UDP-GlcNAc to the non-reducing end of the growing chitin polymer. The polypeptide is Chitin synthase 2 (CHS2) (Rhinocladiella atrovirens).